We begin with the raw amino-acid sequence, 431 residues long: Glutamate-1-semialdehyde 2,1-aminomutase (431 aa).

K266 is subject to N6-(pyridoxal phosphate)lysine.

It belongs to the class-III pyridoxal-phosphate-dependent aminotransferase family. HemL subfamily. In terms of assembly, homodimer. The cofactor is pyridoxal 5'-phosphate.

The protein resides in the cytoplasm. It catalyses the reaction (S)-4-amino-5-oxopentanoate = 5-aminolevulinate. Its pathway is porphyrin-containing compound metabolism; protoporphyrin-IX biosynthesis; 5-aminolevulinate from L-glutamyl-tRNA(Glu): step 2/2. The sequence is that of Glutamate-1-semialdehyde 2,1-aminomutase from Wolinella succinogenes (strain ATCC 29543 / DSM 1740 / CCUG 13145 / JCM 31913 / LMG 7466 / NCTC 11488 / FDC 602W) (Vibrio succinogenes).